The chain runs to 200 residues: Protein OPI10 homolog (200 aa).

The protein belongs to the OPI10 family.

It is found in the cytoplasm. The protein resides in the nucleus envelope. The sequence is that of Protein OPI10 homolog from Schizosaccharomyces pombe (strain 972 / ATCC 24843) (Fission yeast).